The primary structure comprises 124 residues: Large ribosomal subunit protein uL22 (124 aa).

This sequence belongs to the universal ribosomal protein uL22 family. In terms of assembly, part of the 50S ribosomal subunit.

Its function is as follows. This protein binds specifically to 23S rRNA; its binding is stimulated by other ribosomal proteins, e.g. L4, L17, and L20. It is important during the early stages of 50S assembly. It makes multiple contacts with different domains of the 23S rRNA in the assembled 50S subunit and ribosome. Functionally, the globular domain of the protein is located near the polypeptide exit tunnel on the outside of the subunit, while an extended beta-hairpin is found that lines the wall of the exit tunnel in the center of the 70S ribosome. The chain is Large ribosomal subunit protein uL22 from Buchnera aphidicola subsp. Cinara cedri (strain Cc).